The sequence spans 327 residues: MKITVLVGGVGGARFLLGVQNLLGLGSFADGPSKHELTAVVNIGDDAWMHGVRICPDLDTCMYTLGGGIDPDRGWGHRNETWNAKEELAAYGVQPDWFGLGDRDLATHLVRSQMLRAGYPLSQVTEALCKRWQPGARLLPASDERSETHVVITDPTDGERRAIHFQEWWVRYRAKVPTHSFAYVGADQATAGPGVVEAIGDADIVLLAPSNPVVSIGPILQIPGIRGALRSTSAPVIGYSPIIAGKPLRGMADECLKVIGVESTSQAVGEFFGARAGTGLLDGWLVHEGDHAQIEGVKVKAVPLLMTDPEATAAMVRAGLDLAGVSL.

D59 provides a ligand contact to 7,8-didemethyl-8-hydroxy-5-deazariboflavin.

The protein belongs to the CofD family. Homodimer. Requires Mg(2+) as cofactor.

The catalysed reaction is enolpyruvoyl-2-diphospho-5'-guanosine + 7,8-didemethyl-8-hydroxy-5-deazariboflavin = dehydro coenzyme F420-0 + GMP + H(+). Its pathway is cofactor biosynthesis; coenzyme F420 biosynthesis. Its function is as follows. Catalyzes the transfer of the phosphoenolpyruvate moiety from enoylpyruvoyl-2-diphospho-5'-guanosine (EPPG) to 7,8-didemethyl-8-hydroxy-5-deazariboflavin (FO) with the formation of dehydro coenzyme F420-0 and GMP. The sequence is that of Phosphoenolpyruvate transferase from Mycolicibacterium smegmatis (strain ATCC 700084 / mc(2)155) (Mycobacterium smegmatis).